A 509-amino-acid polypeptide reads, in one-letter code: ATP synthase subunit alpha (509 aa).

169–176 (GDRQTGKT) contacts ATP.

It belongs to the ATPase alpha/beta chains family. F-type ATPases have 2 components, CF(1) - the catalytic core - and CF(0) - the membrane proton channel. CF(1) has five subunits: alpha(3), beta(3), gamma(1), delta(1), epsilon(1). CF(0) has three main subunits: a(1), b(2) and c(9-12). The alpha and beta chains form an alternating ring which encloses part of the gamma chain. CF(1) is attached to CF(0) by a central stalk formed by the gamma and epsilon chains, while a peripheral stalk is formed by the delta and b chains.

It localises to the cell inner membrane. It carries out the reaction ATP + H2O + 4 H(+)(in) = ADP + phosphate + 5 H(+)(out). Functionally, produces ATP from ADP in the presence of a proton gradient across the membrane. The alpha chain is a regulatory subunit. This is ATP synthase subunit alpha from Brucella melitensis biotype 1 (strain ATCC 23456 / CCUG 17765 / NCTC 10094 / 16M).